The following is a 632-amino-acid chain: MAU2 chromatid cohesion factor homolog (632 aa).

2 TPR repeats span residues Gly-453–Glu-486 and Ser-493–Ile-526.

This sequence belongs to the SCC4/mau-2 family. In terms of assembly, interacts with Nipped-B to form the cohesin loading complex.

The protein localises to the nucleus. The protein resides in the nucleoplasm. In terms of biological role, required for association of the cohesin complex with chromatin during interphase. Plays a role in sister chromatid cohesion and normal progression through prometaphase. The polypeptide is MAU2 chromatid cohesion factor homolog (Drosophila erecta (Fruit fly)).